Consider the following 1807-residue polypeptide: Nucleoporin nup189 (1807 aa).

A disordered region spans residues 1–118 (MFGQNNSSGF…SGGGLFGSNT (118 aa)). 2 GLFG repeats span residues 26–29 (GLFG) and 66–69 (GLFG). A compositionally biased stretch (polar residues) spans 29 to 61 (GSNSNTPGNTLFGSQNTSTTGFGQNTTQPLFGS). A compositionally biased stretch (low complexity) spans 62-77 (NTNGGLFGNRNNTTTT). The span at 78–90 (GGTGFGMSSGTGM) shows a compositional bias: gly residues. The segment covering 93-108 (QSNTPAFGGTNNATNP) has biased composition (polar residues). GLFG repeat units lie at residues 112–115 (GLFG), 152–155 (GLFG), 177–180 (GLFG), 308–311 (GLFG), 335–338 (GLFG), 350–353 (GLFG), 381–384 (GLFG), 399–402 (GLFG), 435–438 (GLFG), and 521–524 (GLFG). A compositionally biased stretch (polar residues) spans 565–584 (PGTGLFGSTQTNNATSNTGT). The tract at residues 565 to 685 (PGTGLFGSTQ…SSTTSQVAPT (121 aa)) is disordered. 4 GLFG repeats span residues 585–588 (GLFG), 611–614 (GLFG), 627–630 (GLFG), and 646–649 (GLFG). The span at 588–600 (GSNNANTTNTGGS) shows a compositional bias: low complexity. Polar residues predominate over residues 603–644 (NKPSTTTGGLFGNTTAQQPSTTTSGLFGASNTNNQAQTSNFG). Over residues 653-663 (AGQQQQPLQAS) the composition is skewed to low complexity. Residues 664-685 (IDQNPYGNNPLFSSTTSQVAPT) are compositionally biased toward polar residues. Ser724 bears the Phosphoserine mark. The disordered stretch occupies residues 785-814 (QNGVKNGNDAKSDSKVQEKAPQNEADGSLK). The span at 792–802 (NDAKSDSKVQE) shows a compositional bias: basic and acidic residues. The region spanning 822–963 (SDDYWMKPSI…GKWIFKVQHF (142 aa)) is the Peptidase S59 domain. Residues 974-1020 (EENDMSSTSNEAGNLKKYDQPNLKVSGKNDSFVTHHTPGAFPNDSKN) form a disordered region. Phosphoserine is present on Ser1051. The disordered stretch occupies residues 1082–1104 (KENNVPLSEDDLSNSSESSNESV). Low complexity predominate over residues 1094–1104 (SNSSESSNESV).

It belongs to the nucleoporin GLFG family. As to quaternary structure, interacts (via G-L-F-G repeats) with rpn15/dss1. Interacts with raf1. In terms of assembly, interacts with ned1. Nup189 is autocatalytically cleaved in nup98 and nup96.

It is found in the nucleus. Its subcellular location is the nuclear pore complex. Its function is as follows. Functions as a component of the nuclear pore complex (NPC). NPC components, collectively referred to as nucleoporins (NUPs), can play the role of both NPC structural components and of docking or interaction partners for transiently associated nuclear transport factors. Active directional transport is assured by both, a Phe-Gly (FG) repeat affinity gradient for these transport factors across the NPC and a transport cofactor concentration gradient across the nuclear envelope. Nup189 is autocatalytically cleaved in vivo in 2 polypeptides which assume different functions in the NPC. Nup98 as one of the FG repeat nucleoporins participates in karyopherin interactions and contains part of the autocatalytic cleavage activity. Nup96 as part of the NUP84 complex is involved in nuclear poly(A)+ RNA and tRNA export. The chain is Nucleoporin nup189 (nup189) from Schizosaccharomyces pombe (strain 972 / ATCC 24843) (Fission yeast).